The following is a 123-amino-acid chain: Large ribosomal subunit protein bL12 (123 aa).

Belongs to the bacterial ribosomal protein bL12 family. Homodimer. Part of the ribosomal stalk of the 50S ribosomal subunit. Forms a multimeric L10(L12)X complex, where L10 forms an elongated spine to which 2 to 4 L12 dimers bind in a sequential fashion. Binds GTP-bound translation factors.

Its function is as follows. Forms part of the ribosomal stalk which helps the ribosome interact with GTP-bound translation factors. Is thus essential for accurate translation. This Rhodopseudomonas palustris (strain BisA53) protein is Large ribosomal subunit protein bL12.